The primary structure comprises 336 residues: Spore photoproduct lyase (336 aa).

The 232-residue stretch at 74–305 folds into the Radical SAM core domain; the sequence is CKPSANYQLP…KFGQFGYGKY (232 aa). 3 residues coordinate [4Fe-4S] cluster: cysteine 88, cysteine 92, and cysteine 95. The segment at residues 215-232 is a DNA-binding region (H-T-H motif); sequence ESAYNILNSGYKTGFIVG.

This sequence belongs to the radical SAM superfamily. SPL family. As to quaternary structure, monomer or homodimer. [4Fe-4S] cluster is required as a cofactor. It depends on S-adenosyl-L-methionine as a cofactor.

The catalysed reaction is (5R)-5,6-dihydro-5-(thymidin-7-yl)thymidine in DNA = a thymidine dimer in DNA. Involved in repair of UV radiation-induced DNA damage during spore germination. Can repair thymine dimer 5-thyminyl-5,6-dihydrothymine (known as spore photoproduct (SP)) by in situ monomerization of SP to two thymines. The protein is Spore photoproduct lyase (splB) of Clostridium acetobutylicum (strain ATCC 824 / DSM 792 / JCM 1419 / IAM 19013 / LMG 5710 / NBRC 13948 / NRRL B-527 / VKM B-1787 / 2291 / W).